Reading from the N-terminus, the 215-residue chain is Probable transaldolase (215 aa).

Lys-84 acts as the Schiff-base intermediate with substrate in catalysis.

Belongs to the transaldolase family. Type 3B subfamily.

The protein resides in the cytoplasm. The catalysed reaction is D-sedoheptulose 7-phosphate + D-glyceraldehyde 3-phosphate = D-erythrose 4-phosphate + beta-D-fructose 6-phosphate. It functions in the pathway carbohydrate degradation; pentose phosphate pathway; D-glyceraldehyde 3-phosphate and beta-D-fructose 6-phosphate from D-ribose 5-phosphate and D-xylulose 5-phosphate (non-oxidative stage): step 2/3. Transaldolase is important for the balance of metabolites in the pentose-phosphate pathway. This is Probable transaldolase from Exiguobacterium sibiricum (strain DSM 17290 / CCUG 55495 / CIP 109462 / JCM 13490 / 255-15).